Consider the following 299-residue polypeptide: Oxygen-dependent coproporphyrinogen-III oxidase (299 aa).

Ser-92 is a binding site for substrate. A divalent metal cation-binding residues include His-96 and His-106. His-106 serves as the catalytic Proton donor. Residue 108 to 110 participates in substrate binding; sequence NVR. His-145 and His-175 together coordinate a divalent metal cation. The segment at 240–275 is important for dimerization; it reads YVEFNLVWDRGTLFGLQTGGRTESILMSMPPLVRWE. 258-260 is a binding site for substrate; it reads GGR.

This sequence belongs to the aerobic coproporphyrinogen-III oxidase family. As to quaternary structure, homodimer. The cofactor is a divalent metal cation.

Its subcellular location is the cytoplasm. It carries out the reaction coproporphyrinogen III + O2 + 2 H(+) = protoporphyrinogen IX + 2 CO2 + 2 H2O. Its pathway is porphyrin-containing compound metabolism; protoporphyrin-IX biosynthesis; protoporphyrinogen-IX from coproporphyrinogen-III (O2 route): step 1/1. Its function is as follows. Involved in the heme biosynthesis. Catalyzes the aerobic oxidative decarboxylation of propionate groups of rings A and B of coproporphyrinogen-III to yield the vinyl groups in protoporphyrinogen-IX. The chain is Oxygen-dependent coproporphyrinogen-III oxidase from Shigella boydii serotype 18 (strain CDC 3083-94 / BS512).